Here is a 203-residue protein sequence, read N- to C-terminus: Dual specificity phosphatase 29 (203 aa).

The Tyrosine-protein phosphatase domain maps to 47 to 193; sequence HVNQVWPRIY…LRALDIALQE (147 aa). 137–144 lines the substrate pocket; sequence HCVMGRSR. The active-site Phosphocysteine intermediate is the cysteine 138.

The protein belongs to the protein-tyrosine phosphatase family. Non-receptor class dual specificity subfamily.

The protein resides in the cytoplasm. Its subcellular location is the nucleus. It catalyses the reaction O-phospho-L-tyrosyl-[protein] + H2O = L-tyrosyl-[protein] + phosphate. The enzyme catalyses O-phospho-L-seryl-[protein] + H2O = L-seryl-[protein] + phosphate. It carries out the reaction O-phospho-L-threonyl-[protein] + H2O = L-threonyl-[protein] + phosphate. In terms of biological role, dual specificity phosphatase able to dephosphorylate phosphotyrosine, phosphoserine and phosphothreonine residues within the same substrate, with a preference for phosphotyrosine as a substrate. Involved in the modulation of AMPK and MAPK1/2 signaling pathways. The sequence is that of Dual specificity phosphatase 29 (dusp29) from Oryzias latipes (Japanese rice fish).